We begin with the raw amino-acid sequence, 496 residues long: Endoglucanase (496 aa).

The signal sequence occupies residues M1–A23. Catalysis depends on D93, which acts as the Nucleophile. Catalysis depends on residues H415, D467, and E476.

It belongs to the glycosyl hydrolase 9 (cellulase E) family.

The enzyme catalyses Endohydrolysis of (1-&gt;4)-beta-D-glucosidic linkages in cellulose, lichenin and cereal beta-D-glucans.. Involved in ripening fruit process. This is Endoglucanase from Phaseolus vulgaris (Kidney bean).